Reading from the N-terminus, the 98-residue chain is NADH-ubiquinone oxidoreductase chain 4L (98 aa).

A run of 3 helical transmembrane segments spans residues 1 to 21, 29 to 49, and 61 to 81; these read MSMV…GLLM, SLLC…LTIL, and IILL…LVMV.

It belongs to the complex I subunit 4L family. Core subunit of respiratory chain NADH dehydrogenase (Complex I) which is composed of 45 different subunits.

It localises to the mitochondrion inner membrane. It catalyses the reaction a ubiquinone + NADH + 5 H(+)(in) = a ubiquinol + NAD(+) + 4 H(+)(out). Functionally, core subunit of the mitochondrial membrane respiratory chain NADH dehydrogenase (Complex I) which catalyzes electron transfer from NADH through the respiratory chain, using ubiquinone as an electron acceptor. Part of the enzyme membrane arm which is embedded in the lipid bilayer and involved in proton translocation. The chain is NADH-ubiquinone oxidoreductase chain 4L (MT-ND4L) from Bos mutus grunniens (Wild yak).